Here is a 147-residue protein sequence, read N- to C-terminus: Hemoglobin subunit deltaH (147 aa).

The Globin domain occupies 3–147 (RLTDSEKAEV…MANALAHKYH (145 aa)). Heme b contacts are provided by His-64 and His-93.

Belongs to the globin family. In terms of assembly, heterotetramer of two delta chains and two alpha chains. Red blood cells.

The sequence is that of Hemoglobin subunit deltaH (HBD) from Dendrohyrax dorsalis (Beecroft's tree hyrax).